Consider the following 207-residue polypeptide: High frequency lysogenization protein HflD homolog (207 aa).

Belongs to the HflD family.

The protein resides in the cytoplasm. It is found in the cell inner membrane. The polypeptide is High frequency lysogenization protein HflD homolog (Cellvibrio japonicus (strain Ueda107) (Pseudomonas fluorescens subsp. cellulosa)).